We begin with the raw amino-acid sequence, 284 residues long: NH(3)-dependent NAD(+) synthetase (284 aa).

41–48 lines the ATP pocket; the sequence is GLSGGVDS. Aspartate 47 contributes to the Mg(2+) binding site. Arginine 127 lines the deamido-NAD(+) pocket. Threonine 147 contributes to the ATP binding site. Glutamate 152 provides a ligand contact to Mg(2+). Aspartate 167 is a deamido-NAD(+) binding site. Residues lysine 176 and serine 199 each coordinate ATP. Residues 264–284 are disordered; that stretch reads FKRRPAPGLDLPEPEDPAMSG. The span at 275–284 shows a compositional bias: acidic residues; it reads PEPEDPAMSG.

The protein belongs to the NAD synthetase family. As to quaternary structure, homodimer.

The catalysed reaction is deamido-NAD(+) + NH4(+) + ATP = AMP + diphosphate + NAD(+) + H(+). It participates in cofactor biosynthesis; NAD(+) biosynthesis; NAD(+) from deamido-NAD(+) (ammonia route): step 1/1. In terms of biological role, catalyzes the ATP-dependent amidation of deamido-NAD to form NAD. Uses ammonia as a nitrogen source. The chain is NH(3)-dependent NAD(+) synthetase from Methanopyrus kandleri (strain AV19 / DSM 6324 / JCM 9639 / NBRC 100938).